The following is a 458-amino-acid chain: Elongation factor 1-alpha 1 (458 aa).

N,N,N-trimethylglycine is present on Gly2. Lys3 carries the N6,N6-dimethyllysine; alternate modification. Lys3 is subject to N6-methyllysine; alternate. Residues 5-240 enclose the tr-type G domain; the sequence is KTHVNVVVIG…DAIEPPTRPT (236 aa). The interval 14–21 is G1; sequence GHVDSGKS. GTP is bound at residue 14 to 21; sequence GHVDSGKS. N6-methyllysine is present on Lys30. Residues 70-74 form a G2 region; the sequence is GITID. Lys79 bears the N6,N6,N6-trimethyllysine mark. Residues 91–94 are G3; it reads DAPG. GTP contacts are provided by residues 91–95 and 153–156; these read DAPGH and NKMD. The G4 stretch occupies residues 153–156; the sequence is NKMD. The tract at residues 192 to 194 is G5; the sequence is SGW. N6,N6-dimethyllysine; alternate is present on Lys316. N6-methyllysine; alternate is present on Lys316. Lys390 bears the N6-methyllysine mark.

It belongs to the TRAFAC class translation factor GTPase superfamily. Classic translation factor GTPase family. EF-Tu/EF-1A subfamily.

The protein localises to the cytoplasm. In terms of biological role, this protein promotes the GTP-dependent binding of aminoacyl-tRNA to the A-site of ribosomes during protein biosynthesis. The sequence is that of Elongation factor 1-alpha 1 (TEF1) from Candida albicans (strain SC5314 / ATCC MYA-2876) (Yeast).